The primary structure comprises 105 residues: Small ribosomal subunit protein uS10 (105 aa).

Belongs to the universal ribosomal protein uS10 family. In terms of assembly, part of the 30S ribosomal subunit.

Functionally, involved in the binding of tRNA to the ribosomes. In Rickettsia rickettsii (strain Iowa), this protein is Small ribosomal subunit protein uS10.